The following is a 388-amino-acid chain: Succinate--CoA ligase [ADP-forming] subunit beta (388 aa).

The region spanning 9–244 (KQLFARYGLP…QSQEDPREAQ (236 aa)) is the ATP-grasp domain. ATP-binding positions include lysine 46, 53–55 (GRG), glutamate 99, threonine 102, and glutamate 107. Residues asparagine 199 and aspartate 213 each contribute to the Mg(2+) site. Substrate-binding positions include asparagine 264 and 321-323 (GIV).

Belongs to the succinate/malate CoA ligase beta subunit family. In terms of assembly, heterotetramer of two alpha and two beta subunits. The cofactor is Mg(2+).

The catalysed reaction is succinate + ATP + CoA = succinyl-CoA + ADP + phosphate. It catalyses the reaction GTP + succinate + CoA = succinyl-CoA + GDP + phosphate. It functions in the pathway carbohydrate metabolism; tricarboxylic acid cycle; succinate from succinyl-CoA (ligase route): step 1/1. Succinyl-CoA synthetase functions in the citric acid cycle (TCA), coupling the hydrolysis of succinyl-CoA to the synthesis of either ATP or GTP and thus represents the only step of substrate-level phosphorylation in the TCA. The beta subunit provides nucleotide specificity of the enzyme and binds the substrate succinate, while the binding sites for coenzyme A and phosphate are found in the alpha subunit. In Enterobacter sp. (strain 638), this protein is Succinate--CoA ligase [ADP-forming] subunit beta.